Consider the following 214-residue polypeptide: Probable transaldolase (214 aa).

The Schiff-base intermediate with substrate role is filled by Lys83.

This sequence belongs to the transaldolase family. Type 3B subfamily.

It is found in the cytoplasm. It catalyses the reaction D-sedoheptulose 7-phosphate + D-glyceraldehyde 3-phosphate = D-erythrose 4-phosphate + beta-D-fructose 6-phosphate. It functions in the pathway carbohydrate degradation; pentose phosphate pathway; D-glyceraldehyde 3-phosphate and beta-D-fructose 6-phosphate from D-ribose 5-phosphate and D-xylulose 5-phosphate (non-oxidative stage): step 2/3. Transaldolase is important for the balance of metabolites in the pentose-phosphate pathway. This is Probable transaldolase from Streptococcus pyogenes serotype M2 (strain MGAS10270).